Reading from the N-terminus, the 878-residue chain is Leucine--tRNA ligase (878 aa).

The 'HIGH' region motif lies at 56-66 (PYPSGKLHMGH). Residues 630–634 (KMSKS) carry the 'KMSKS' region motif. Lys633 provides a ligand contact to ATP.

It belongs to the class-I aminoacyl-tRNA synthetase family.

It localises to the cytoplasm. The catalysed reaction is tRNA(Leu) + L-leucine + ATP = L-leucyl-tRNA(Leu) + AMP + diphosphate. The polypeptide is Leucine--tRNA ligase (Prochlorococcus marinus (strain MIT 9313)).